The chain runs to 483 residues: UDP-N-acetylmuramoyl-L-alanyl-D-glutamate--2,6-diaminopimelate ligase (483 aa).

S30 contributes to the UDP-N-acetyl-alpha-D-muramoyl-L-alanyl-D-glutamate binding site. 109-115 is an ATP binding site; it reads GTNGKTT. Residues 151-152, S178, and R186 contribute to the UDP-N-acetyl-alpha-D-muramoyl-L-alanyl-D-glutamate site; that span reads TT. K218 bears the N6-carboxylysine mark. Residues R380, 403 to 406, G453, and E457 each bind meso-2,6-diaminopimelate; that span reads DNPR. Residues 403–406 carry the Meso-diaminopimelate recognition motif motif; it reads DNPR.

Belongs to the MurCDEF family. MurE subfamily. It depends on Mg(2+) as a cofactor. Carboxylation is probably crucial for Mg(2+) binding and, consequently, for the gamma-phosphate positioning of ATP.

Its subcellular location is the cytoplasm. The catalysed reaction is UDP-N-acetyl-alpha-D-muramoyl-L-alanyl-D-glutamate + meso-2,6-diaminopimelate + ATP = UDP-N-acetyl-alpha-D-muramoyl-L-alanyl-gamma-D-glutamyl-meso-2,6-diaminopimelate + ADP + phosphate + H(+). It functions in the pathway cell wall biogenesis; peptidoglycan biosynthesis. Its function is as follows. Catalyzes the addition of meso-diaminopimelic acid to the nucleotide precursor UDP-N-acetylmuramoyl-L-alanyl-D-glutamate (UMAG) in the biosynthesis of bacterial cell-wall peptidoglycan. This chain is UDP-N-acetylmuramoyl-L-alanyl-D-glutamate--2,6-diaminopimelate ligase, found in Chlamydia muridarum (strain MoPn / Nigg).